Consider the following 200-residue polypeptide: Fibrillarin-like rRNA/tRNA 2'-O-methyltransferase (200 aa).

Residues 62–63, 78–79, 103–104, and 123–126 contribute to the S-adenosyl-L-methionine site; these read TT, EF, DA, and DVAQ.

The protein belongs to the methyltransferase superfamily. Fibrillarin family. In terms of assembly, interacts with nop5. Component of box C/D small ribonucleoprotein (sRNP) particles that contain rpl7ae, FlpA and nop5, plus a guide RNA.

Involved in pre-rRNA and tRNA processing. Utilizes the methyl donor S-adenosyl-L-methionine to catalyze the site-specific 2'-hydroxyl methylation of ribose moieties in rRNA and tRNA. Site specificity is provided by a guide RNA that base pairs with the substrate. Methylation occurs at a characteristic distance from the sequence involved in base pairing with the guide RNA. The protein is Fibrillarin-like rRNA/tRNA 2'-O-methyltransferase of Methanoculleus marisnigri (strain ATCC 35101 / DSM 1498 / JR1).